The primary structure comprises 235 residues: Purine nucleoside phosphorylase DeoD-type (235 aa).

His-4 provides a ligand contact to a purine D-ribonucleoside. Phosphate-binding positions include Gly-20, Arg-24, Arg-43, and 87 to 90 (RVGT). A purine D-ribonucleoside contacts are provided by residues Glu-162, 179–181 (EME), and 203–204 (SD). Asp-204 functions as the Proton donor in the catalytic mechanism.

This sequence belongs to the PNP/UDP phosphorylase family. Homohexamer; trimer of homodimers.

It catalyses the reaction a purine D-ribonucleoside + phosphate = a purine nucleobase + alpha-D-ribose 1-phosphate. The enzyme catalyses a purine 2'-deoxy-D-ribonucleoside + phosphate = a purine nucleobase + 2-deoxy-alpha-D-ribose 1-phosphate. Functionally, catalyzes the reversible phosphorolytic breakdown of the N-glycosidic bond in the beta-(deoxy)ribonucleoside molecules, with the formation of the corresponding free purine bases and pentose-1-phosphate. In Bacillus cereus (strain B4264), this protein is Purine nucleoside phosphorylase DeoD-type.